Consider the following 366-residue polypeptide: tRNA-specific 2-thiouridylase MnmA (366 aa).

ATP contacts are provided by residues 6-13 (AMSGGVDS) and leucine 32. Cysteine 101 acts as the Nucleophile in catalysis. Cysteine 101 and cysteine 198 are disulfide-bonded. Glycine 125 contributes to the ATP binding site. The segment at 148–150 (KDQ) is interaction with tRNA. The active-site Cysteine persulfide intermediate is cysteine 198.

It belongs to the MnmA/TRMU family.

The protein localises to the cytoplasm. The enzyme catalyses S-sulfanyl-L-cysteinyl-[protein] + uridine(34) in tRNA + AH2 + ATP = 2-thiouridine(34) in tRNA + L-cysteinyl-[protein] + A + AMP + diphosphate + H(+). In terms of biological role, catalyzes the 2-thiolation of uridine at the wobble position (U34) of tRNA, leading to the formation of s(2)U34. In Nocardioides sp. (strain ATCC BAA-499 / JS614), this protein is tRNA-specific 2-thiouridylase MnmA.